Here is a 415-residue protein sequence, read N- to C-terminus: Diaminopimelate decarboxylase (415 aa).

An N6-(pyridoxal phosphate)lysine modification is found at K60. Pyridoxal 5'-phosphate is bound by residues G239 and 274–277 (EPGR). Residues R277, R313, and Y317 each contribute to the substrate site. The active-site Proton donor is the C344. Substrate is bound by residues E345 and Y372. Position 372 (Y372) interacts with pyridoxal 5'-phosphate.

It belongs to the Orn/Lys/Arg decarboxylase class-II family. LysA subfamily. As to quaternary structure, homodimer. Pyridoxal 5'-phosphate is required as a cofactor.

It catalyses the reaction meso-2,6-diaminopimelate + H(+) = L-lysine + CO2. It participates in amino-acid biosynthesis; L-lysine biosynthesis via DAP pathway; L-lysine from DL-2,6-diaminopimelate: step 1/1. Functionally, specifically catalyzes the decarboxylation of meso-diaminopimelate (meso-DAP) to L-lysine. This is Diaminopimelate decarboxylase from Haemophilus influenzae (strain ATCC 51907 / DSM 11121 / KW20 / Rd).